Consider the following 36-residue polypeptide: Beta-amanitin proprotein (36 aa).

The propeptide occupies 1–10; it reads MSDINATRLP. A cross-link (cyclopeptide (Ile-Pro)) is located at residues 11 to 18; sequence IWGIGCDP. The segment at residues 12 to 16 is a cross-link (2'-cysteinyl-6'-hydroxytryptophan sulfoxide (Trp-Cys)); sequence WGIGC. Positions 19-36 are excised as a propeptide; that stretch reads CIGDDVTALLTRGEASLC.

This sequence belongs to the MSDIN fungal toxin family. Processed by the macrocyclase-peptidase enzyme POPB to yield a toxic cyclic decapeptide. POPB first removes 10 residues from the N-terminus. Conformational trapping of the remaining peptide forces the enzyme to release this intermediate rather than proceed to macrocyclization. The enzyme rebinds the remaining peptide in a different conformation and catalyzes macrocyclization of the N-terminal 8 residues.

Toxin belonging to the bicyclic octapeptides amatoxins that acts by binding non-competitively to RNA polymerase II and greatly slowing the elongation of transcripts from target promoters. In Amanita phalloides (Death cap), this protein is Beta-amanitin proprotein.